Here is a 118-residue protein sequence, read N- to C-terminus: MARIAGVNIPDNKHAVISLTYVYGIGRTTAKQICAATGIAEDTKIGTLSEEQMDAIRAEVGKHTVEGDLRREINMNIKRLMDLGCYRGLRHRRGLPLRGQRTKTNARTRKGPRKPIKK.

Residues 94 to 118 (GLPLRGQRTKTNARTRKGPRKPIKK) are disordered.

This sequence belongs to the universal ribosomal protein uS13 family. Part of the 30S ribosomal subunit. Forms a loose heterodimer with protein S19. Forms two bridges to the 50S subunit in the 70S ribosome.

Functionally, located at the top of the head of the 30S subunit, it contacts several helices of the 16S rRNA. In the 70S ribosome it contacts the 23S rRNA (bridge B1a) and protein L5 of the 50S subunit (bridge B1b), connecting the 2 subunits; these bridges are implicated in subunit movement. Contacts the tRNAs in the A and P-sites. In Cellvibrio japonicus (strain Ueda107) (Pseudomonas fluorescens subsp. cellulosa), this protein is Small ribosomal subunit protein uS13.